The sequence spans 428 residues: Adenylosuccinate synthetase (428 aa).

Residues 12-18 and 40-42 contribute to the GTP site; these read GDEGKGK and GHT. Residue D13 is the Proton acceptor of the active site. Positions 13 and 40 each coordinate Mg(2+). IMP is bound by residues 13–16, 38–41, T128, R142, Q223, T238, and R302; these read DEGK and NAGH. H41 functions as the Proton donor in the catalytic mechanism. 298-304 lines the substrate pocket; that stretch reads TTTGRPR. GTP contacts are provided by residues R304, 330–332, and 412–414; these read SID and SVG.

It belongs to the adenylosuccinate synthetase family. As to quaternary structure, homodimer. Mg(2+) is required as a cofactor.

Its subcellular location is the cytoplasm. The catalysed reaction is IMP + L-aspartate + GTP = N(6)-(1,2-dicarboxyethyl)-AMP + GDP + phosphate + 2 H(+). The protein operates within purine metabolism; AMP biosynthesis via de novo pathway; AMP from IMP: step 1/2. In terms of biological role, plays an important role in the de novo pathway of purine nucleotide biosynthesis. Catalyzes the first committed step in the biosynthesis of AMP from IMP. In Shouchella clausii (strain KSM-K16) (Alkalihalobacillus clausii), this protein is Adenylosuccinate synthetase.